A 380-amino-acid chain; its full sequence is MSCPYAGNGNDHDDAAVPLSTEVGKIYGEYLMLDKLLDAQCMLSTEDKRPVHDEHLFIITHQAYELWFKQIIFEFDSIRDMLDAEVIDETKTLEIVKRLNRVVLILKLLVDQVPILETMTPLDFMDFRKYLAPASGFQSLQFRLIENKLGVLTEQRVRYNQKYSDVFGGDEQALSAIRSSEYEPSLLELVQRWLERTPGLEESGFNFWKKFQQSVDQFLAAQVEIAMEEPVEQAKNYRLMDIEKRREVYHSIFDPAVHEALVKRGDRRFSHRALQGAIMITFYRDEPRFSQPHQLLTLLMDIDSLITKWRYNHVIMVQRMIGSQQLGTGGSSGYQYLRSTLSDRYKVFLDLFNLSTFLIPREAIPPLDETIRKKLVHKSV.

Substrate-binding positions include 57 to 61 and arginine 128; that span reads FIITH. Histidine 313 contacts heme. Residue threonine 328 participates in substrate binding.

Belongs to the tryptophan 2,3-dioxygenase family. Homotetramer. Dimer of dimers. Heme serves as cofactor.

It carries out the reaction L-tryptophan + O2 = N-formyl-L-kynurenine. Its pathway is amino-acid degradation; L-tryptophan degradation via kynurenine pathway; L-kynurenine from L-tryptophan: step 1/2. It functions in the pathway pigment biosynthesis; ommochrome biosynthesis. In terms of biological role, heme-dependent dioxygenase that catalyzes the oxidative cleavage of the L-tryptophan (L-Trp) pyrrole ring and converts L-tryptophan to N-formyl-L-kynurenine. Catalyzes the oxidative cleavage of the indole moiety. This Drosophila persimilis (Fruit fly) protein is Tryptophan 2,3-dioxygenase.